Here is a 386-residue protein sequence, read N- to C-terminus: Epoxyqueuosine reductase (386 aa).

Cob(II)alamin contacts are provided by residues Arg57, Cys97, Asp134, 139-141 (SDR), Ser152, Asn155, Ile158, and Leu169. The active-site Proton donor is Asp134. The 4Fe-4S ferredoxin-type domain maps to 178 to 208 (FEPDVPIEDMCGSCTKCLDACPTGALVNPGQ). [4Fe-4S] cluster contacts are provided by Cys188, Cys191, Cys194, Cys198, and Cys214. Residue Ser216 coordinates cob(II)alamin. TRNA-binding residues include Gln220 and Lys222. Residues Cys240, Cys243, and Cys247 each coordinate [4Fe-4S] cluster. Position 240 to 241 (240 to 241 (CD)) interacts with cob(II)alamin. Residues Asn280, Arg281, Arg295, Lys297, and Lys298 each contribute to the tRNA site. An HEAT-like PBS-type repeat occupies 333–357 (RGTAAWAIGKIGDPAYAEELEKALE).

The protein belongs to the QueG family. Monomer. It depends on cob(II)alamin as a cofactor. [4Fe-4S] cluster is required as a cofactor.

The protein resides in the cytoplasm. It carries out the reaction epoxyqueuosine(34) in tRNA + AH2 = queuosine(34) in tRNA + A + H2O. Its pathway is tRNA modification; tRNA-queuosine biosynthesis. In terms of biological role, catalyzes the conversion of epoxyqueuosine (oQ) to queuosine (Q), which is a hypermodified base found in the wobble positions of tRNA(Asp), tRNA(Asn), tRNA(His) and tRNA(Tyr). The protein is Epoxyqueuosine reductase of Bacillus subtilis (strain 168).